The sequence spans 411 residues: Lissencephaly-1 homolog (411 aa).

Residues 9–41 (QREELNQAIADYLGSNGYADSLETFRKEADLST) enclose the LisH domain. A coiled-coil region spans residues 56-83 (TSVIRLQKKVMELEAKLTEAEKEVIEGA). WD repeat units follow at residues 106–147 (GHRA…RSLK), 148–187 (GHTD…ECIK), 191–230 (GHDH…CVKT), 233–272 (GHRE…CKVE), 275–334 (DHEH…CLLT), 337–376 (GHDN…CMKT), and 379–411 (AHQH…WECR).

This sequence belongs to the WD repeat LIS1/nudF family.

Its subcellular location is the cytoplasm. It localises to the cytoskeleton. The protein localises to the microtubule organizing center. It is found in the centrosome. In terms of biological role, positively regulates the activity of the minus-end directed microtubule motor protein dynein. May enhance dynein-mediated microtubule sliding by targeting dynein to the microtubule plus end. Required for several dynein- and microtubule-dependent processes. This Drosophila yakuba (Fruit fly) protein is Lissencephaly-1 homolog.